The sequence spans 294 residues: 4-diphosphocytidyl-2-C-methyl-D-erythritol kinase (294 aa).

Lysine 16 is a catalytic residue. Position 99 to 109 (99 to 109) interacts with ATP; it reads PMGAGLGGGSS. The active site involves aspartate 141.

It belongs to the GHMP kinase family. IspE subfamily.

The enzyme catalyses 4-CDP-2-C-methyl-D-erythritol + ATP = 4-CDP-2-C-methyl-D-erythritol 2-phosphate + ADP + H(+). The protein operates within isoprenoid biosynthesis; isopentenyl diphosphate biosynthesis via DXP pathway; isopentenyl diphosphate from 1-deoxy-D-xylulose 5-phosphate: step 3/6. In terms of biological role, catalyzes the phosphorylation of the position 2 hydroxy group of 4-diphosphocytidyl-2C-methyl-D-erythritol. The protein is 4-diphosphocytidyl-2-C-methyl-D-erythritol kinase of Polynucleobacter asymbioticus (strain DSM 18221 / CIP 109841 / QLW-P1DMWA-1) (Polynucleobacter necessarius subsp. asymbioticus).